The primary structure comprises 393 residues: Formate-dependent phosphoribosylglycinamide formyltransferase (393 aa).

Residues 22 to 23 and Glu82 contribute to the N(1)-(5-phospho-beta-D-ribosyl)glycinamide site; that span reads EL. Residues Arg114, Lys155, 160–165, 195–198, and Glu203 contribute to the ATP site; these read SSGKGQ and EGFI. One can recognise an ATP-grasp domain in the interval 119–308; that stretch reads RLAAEELGLP…EFALHARAIL (190 aa). The Mg(2+) site is built by Glu267 and Glu279. N(1)-(5-phospho-beta-D-ribosyl)glycinamide is bound by residues Asp286, Lys356, and 363–364; that span reads RR.

It belongs to the PurK/PurT family. As to quaternary structure, homodimer.

The enzyme catalyses N(1)-(5-phospho-beta-D-ribosyl)glycinamide + formate + ATP = N(2)-formyl-N(1)-(5-phospho-beta-D-ribosyl)glycinamide + ADP + phosphate + H(+). It functions in the pathway purine metabolism; IMP biosynthesis via de novo pathway; N(2)-formyl-N(1)-(5-phospho-D-ribosyl)glycinamide from N(1)-(5-phospho-D-ribosyl)glycinamide (formate route): step 1/1. Involved in the de novo purine biosynthesis. Catalyzes the transfer of formate to 5-phospho-ribosyl-glycinamide (GAR), producing 5-phospho-ribosyl-N-formylglycinamide (FGAR). Formate is provided by PurU via hydrolysis of 10-formyl-tetrahydrofolate. The sequence is that of Formate-dependent phosphoribosylglycinamide formyltransferase from Pseudomonas aeruginosa (strain LESB58).